The sequence spans 188 residues: UPF0301 protein Smal_0940 (188 aa).

It belongs to the UPF0301 (AlgH) family.

The chain is UPF0301 protein Smal_0940 from Stenotrophomonas maltophilia (strain R551-3).